We begin with the raw amino-acid sequence, 133 residues long: MAEWHKIIEDISKNNNFEDAAIVDYKTTKNVLAAIPNRTFAKINPGEVIPLITNHNILKPLIGQKFCIVYTNSLMDENTYAMELLTGYAPVSPIVIARTHTALIFLMGKPTTSRRDVYRTCRDHATRVRATGN.

Belongs to the profilin family. In terms of assembly, interacts with host TPM1. Interacts with protein A25.

The protein localises to the host cytoplasm. Its function is as follows. Participates in either intracellular transport of viral proteins or intercellular spread of the virus. Cellular profilins modulate actin filament dynamics (polymerization and depolymerization) via direct binding to actin through an actin-binding domain as well as by modulation of other actin-binding proteins. In contrast to cellular homologs, the poxvirus profilins seem to bind actin only weakly. The protein is Profilin (OPG171) of Variola virus (isolate Human/India/Ind3/1967) (VARV).